A 291-amino-acid polypeptide reads, in one-letter code: 4-diphosphocytidyl-2-C-methyl-D-erythritol kinase (291 aa).

The active site involves K11. 95 to 105 lines the ATP pocket; it reads PVAAGLAGGSS. Residue D137 is part of the active site.

This sequence belongs to the GHMP kinase family. IspE subfamily.

The enzyme catalyses 4-CDP-2-C-methyl-D-erythritol + ATP = 4-CDP-2-C-methyl-D-erythritol 2-phosphate + ADP + H(+). It participates in isoprenoid biosynthesis; isopentenyl diphosphate biosynthesis via DXP pathway; isopentenyl diphosphate from 1-deoxy-D-xylulose 5-phosphate: step 3/6. Its function is as follows. Catalyzes the phosphorylation of the position 2 hydroxy group of 4-diphosphocytidyl-2C-methyl-D-erythritol. The chain is 4-diphosphocytidyl-2-C-methyl-D-erythritol kinase from Alkaliphilus metalliredigens (strain QYMF).